A 432-amino-acid chain; its full sequence is Teosinte glume architecture 1 (432 aa).

Disordered stretches follow at residues 20–55 (HAAA…GAPA) and 68–102 (ECEP…QQQC). The segment covering 22 to 41 (AAAPSSGGHAANAAAAGTGT) has biased composition (low complexity). Residues 102-179 (CPSCAVDGCR…DGHNRRRRKP (78 aa)) form an SBP-type zinc finger. The Zn(2+) site is built by C105, C110, C127, H130, C146, C149, H153, and C165. The segment covering 409 to 420 (GGGSGGGEGSSD) has biased composition (gly residues). Residues 409–432 (GGGSGGGEGSSDGGTSSSMPFSWQ) are disordered.

As to quaternary structure, monomer and homodimer. In terms of tissue distribution, strongly expressed in immature ears and weakly in husks. Found in the inflorescence meristem of the developing ear, in the spikelet pair primordia, the glume primordia, the cupule forming region and other floral organs. Not detected in other tissues.

Functionally, SBP transcriptional regulator probably involved in the domestication of maize. Acts as a transcriptional repressor binding to a 5'-GTAC-3' motif. May repress the growth of lateral branches in length and numbers. The polypeptide is Teosinte glume architecture 1 (Zea mays (Maize)).